A 31-amino-acid polypeptide reads, in one-letter code: Cytochrome b6-f complex subunit 6 (31 aa).

The chain crosses the membrane as a helical span at residues 4-24 (ITSYFGFLLAALTITSVLFIG).

The protein belongs to the PetL family. The 4 large subunits of the cytochrome b6-f complex are cytochrome b6, subunit IV (17 kDa polypeptide, PetD), cytochrome f and the Rieske protein, while the 4 small subunits are PetG, PetL, PetM and PetN. The complex functions as a dimer.

Its subcellular location is the plastid. The protein resides in the chloroplast thylakoid membrane. In terms of biological role, component of the cytochrome b6-f complex, which mediates electron transfer between photosystem II (PSII) and photosystem I (PSI), cyclic electron flow around PSI, and state transitions. PetL is important for photoautotrophic growth as well as for electron transfer efficiency and stability of the cytochrome b6-f complex. The chain is Cytochrome b6-f complex subunit 6 from Arabidopsis thaliana (Mouse-ear cress).